The primary structure comprises 378 residues: Acid phosphatase-like protein XcAP-2 (378 aa).

Residues 1–19 (MKTTILLLVVLTIVQLSKA) form the signal peptide. 3 disulfide bridges follow: cysteine 147-cysteine 374, cysteine 168-cysteine 220, and cysteine 347-cysteine 351.

Belongs to the histidine acid phosphatase family.

It is found in the secreted. In terms of biological role, probably modulates blood feeding of fleas on vertebrate species by binding and sequestering different mediators involved in the host response. Binds histamine. Binds leukotriene B4, leukotriene C4, leukotriene D4 and leukotriene E4. Does not bind serotonin, adrenaline, noradrenaline, ADP, and stable analogs of thromboxane A2: U-46619 and cTXA2. The sequence is that of Acid phosphatase-like protein XcAP-2 from Xenopsylla cheopis (Oriental rat flea).